A 202-amino-acid polypeptide reads, in one-letter code: Holliday junction resolvase RecU (202 aa).

Residues Thr85, Asp87, Glu100, and Gln119 each contribute to the Mg(2+) site.

Belongs to the RecU family. Mg(2+) is required as a cofactor.

It is found in the cytoplasm. It carries out the reaction Endonucleolytic cleavage at a junction such as a reciprocal single-stranded crossover between two homologous DNA duplexes (Holliday junction).. Its function is as follows. Endonuclease that resolves Holliday junction intermediates in genetic recombination. Cleaves mobile four-strand junctions by introducing symmetrical nicks in paired strands. Promotes annealing of linear ssDNA with homologous dsDNA. Required for DNA repair, homologous recombination and chromosome segregation. The chain is Holliday junction resolvase RecU from Streptococcus equi subsp. zooepidemicus (strain H70).